Reading from the N-terminus, the 286-residue chain is NAD kinase (286 aa).

Catalysis depends on Asp-74, which acts as the Proton acceptor. Residues 74–75 (DG), 148–149 (ND), Asp-178, Ala-186, 189–194 (TAYNLS), and Gln-244 contribute to the NAD(+) site.

It belongs to the NAD kinase family. The cofactor is a divalent metal cation.

It is found in the cytoplasm. The catalysed reaction is NAD(+) + ATP = ADP + NADP(+) + H(+). Its function is as follows. Involved in the regulation of the intracellular balance of NAD and NADP, and is a key enzyme in the biosynthesis of NADP. Catalyzes specifically the phosphorylation on 2'-hydroxyl of the adenosine moiety of NAD to yield NADP. The protein is NAD kinase of Campylobacter jejuni subsp. jejuni serotype O:2 (strain ATCC 700819 / NCTC 11168).